The chain runs to 378 residues: Fetuin-B (378 aa).

Positions Met-1–Ala-18 are cleaved as a signal peptide. Cystatin fetuin-B-type domains follow at residues Asn-28–Thr-141 and Ser-152–Glu-261. A glycan (N-linked (GlcNAc...) asparagine) is linked at Asn-40. 5 cysteine pairs are disulfide-bonded: Cys-96/Cys-107, Cys-120/Cys-140, Cys-154/Cys-157, Cys-217/Cys-224, and Cys-237/Cys-260. N-linked (GlcNAc...) asparagine glycosylation occurs at Asn-139. Disordered regions lie at residues Gln-266–Asp-338 and Leu-357–Pro-378. The span at Gln-286–Ile-297 shows a compositional bias: polar residues. O-linked (GalNAc...) threonine glycans are attached at residues Thr-289 and Thr-292. Ser-316 bears the Phosphoserine mark. Positions Lys-362–Pro-378 are enriched in basic and acidic residues.

This sequence belongs to the fetuin family. Liver.

It localises to the secreted. In terms of biological role, protease inhibitor required for egg fertilization. Required to prevent premature zona pellucida hardening before fertilization, probably by inhibiting the protease activity of ASTL, a protease that mediates the cleavage of ZP2 and triggers zona pellucida hardening. The sequence is that of Fetuin-B (Fetub) from Rattus norvegicus (Rat).